A 179-amino-acid chain; its full sequence is Large ribosomal subunit protein uL5 (179 aa).

It belongs to the universal ribosomal protein uL5 family. As to quaternary structure, part of the 50S ribosomal subunit; part of the 5S rRNA/L5/L18/L25 subcomplex. Contacts the 5S rRNA and the P site tRNA. Forms a bridge to the 30S subunit in the 70S ribosome.

This is one of the proteins that bind and probably mediate the attachment of the 5S RNA into the large ribosomal subunit, where it forms part of the central protuberance. In the 70S ribosome it contacts protein S13 of the 30S subunit (bridge B1b), connecting the 2 subunits; this bridge is implicated in subunit movement. Contacts the P site tRNA; the 5S rRNA and some of its associated proteins might help stabilize positioning of ribosome-bound tRNAs. This chain is Large ribosomal subunit protein uL5, found in Thioalkalivibrio sulfidiphilus (strain HL-EbGR7).